The primary structure comprises 199 residues: Small ribosomal subunit protein uS2 (199 aa).

It belongs to the universal ribosomal protein uS2 family.

In Thermoplasma volcanium (strain ATCC 51530 / DSM 4299 / JCM 9571 / NBRC 15438 / GSS1), this protein is Small ribosomal subunit protein uS2 (rps2).